An 872-amino-acid polypeptide reads, in one-letter code: Alanine--tRNA ligase (872 aa).

H567, H571, C669, and H673 together coordinate Zn(2+).

The protein belongs to the class-II aminoacyl-tRNA synthetase family. It depends on Zn(2+) as a cofactor.

Its subcellular location is the cytoplasm. It carries out the reaction tRNA(Ala) + L-alanine + ATP = L-alanyl-tRNA(Ala) + AMP + diphosphate. Functionally, catalyzes the attachment of alanine to tRNA(Ala) in a two-step reaction: alanine is first activated by ATP to form Ala-AMP and then transferred to the acceptor end of tRNA(Ala). Also edits incorrectly charged Ser-tRNA(Ala) and Gly-tRNA(Ala) via its editing domain. This chain is Alanine--tRNA ligase, found in Streptococcus pyogenes serotype M28 (strain MGAS6180).